A 456-amino-acid polypeptide reads, in one-letter code: MRRKWRSEDFHFVFFGVLCLLLIDRGKLEQVKHSDTYCVFQDKKYRVGERWHPYLEPYGLVYCVNCLCSENGNVLCSRIRCPSLHCPSPVHVPQLCCPRCPEDSLFSVSSKITGKSCEYNGTTYHHGEMFVAEGLFQNRQANQCAQCSCSEGNVYCGLKTCPKLTCSFPVSVPESCCPVCRGDGELSWEQADGDIFRQPANREARHSYHRPHYELSPSSTRQVVNVPRFPSARSNRGVLPDPQQASGTIVQIVINNKHKHGRVCVSNGKTYSHGESWHPNLRAFGIVECVLCTCNITKQECKKIHCPEQYPCKYPQKVEGKCCKVCPEEVPSQSFDNKDYFCGKETFPVYESIFTEEGETIRKIAVETEKPPQIEIHVWTIRKGILRHFYIEKMSKREFEELPYFKQITRTTSSQWKIFSEGEAQISQMCESRVCRTELEDLVKVLYLEKSEKGHC.

The first 28 residues, 1–28 (MRRKWRSEDFHFVFFGVLCLLLIDRGKL), serve as a signal peptide directing secretion. 3 VWFC domains span residues 36–101 (TYCV…PRCP), 115–181 (KSCE…PVCR), and 262–327 (RVCV…KVCP). N120 carries N-linked (GlcNAc...) asparagine glycosylation. The Cell attachment site signature appears at 181–183 (RGD). N295 carries N-linked (GlcNAc...) asparagine glycosylation.

As to expression, mainly expressed in the ventral retina.

The protein localises to the secreted. Seems to antagonize the function of BMP4 by binding to it and preventing its interaction with receptors. In Gallus gallus (Chicken), this protein is Chordin-like protein 1 (CHRDL1).